Here is a 413-residue protein sequence, read N- to C-terminus: Corticotropin-releasing factor receptor 2 (413 aa).

The not cleaved signal peptide spans 1–22; that stretch reads MDSTIFEIIIDEFDANCSLLDA. Residues 1–110 lie on the Extracellular side of the membrane; sequence MDSTIFEIII…CVPILDNKRK (110 aa). The N-linked (GlcNAc...) asparagine glycan is linked to Asn16. 3 cysteine pairs are disulfide-bonded: Cys17-Cys53, Cys43-Cys86, and Cys67-Cys101. Residues Asn77, Asn89, and Asn97 are each glycosylated (N-linked (GlcNAc...) asparagine). The helical transmembrane segment at 111–141 threads the bilayer; that stretch reads YALHYKIALIINYLGHCISILALVIAFLLFL. Residues 142-148 lie on the Cytoplasmic side of the membrane; it reads CLRSIRC. A helical transmembrane segment spans residues 149 to 173; that stretch reads LRNIIHWNLITTFILRNIMWFLLQM. The Extracellular segment spans residues 174-187; the sequence is IDHNIHESNEVWCR. Residues Cys186 and Cys256 are joined by a disulfide bond. A helical transmembrane segment spans residues 188–216; the sequence is CITTIYNYFVVTNFFWMFVEGCYLHTAIV. Over 217-223 the chain is Cytoplasmic; that stretch reads MTYSTDK. A helical transmembrane segment spans residues 224–251; that stretch reads LRKWVFLFIGWCIPSPIIVTWAICKLFY. The Extracellular segment spans residues 252–267; sequence ENEQCWIGKEPGKYID. A helical membrane pass occupies residues 268–293; the sequence is YIYQGRVILVLLINFVFLFNIVRILM. At 294-304 the chain is on the cytoplasmic side; that stretch reads TKLRASTTSET. The helical transmembrane segment at 305 to 329 threads the bilayer; it reads IQYRKAVKATLVLLPLLGITYMLFF. The Extracellular portion of the chain corresponds to 330–336; that stretch reads VNPGEDD. A helical membrane pass occupies residues 337–366; it reads VSQIVFIYFNSFLQSFQGFFVSVFYCFLNG. Over 367 to 413 the chain is Cytoplasmic; sequence EVRSAARKRWHRWQDHHSLRVRVARAMSIPTSPTRISFHSIKQTAAV.

The protein belongs to the G-protein coupled receptor 2 family. Post-translationally, a N-glycosylation site within the signal peptide impedes its proper cleavage and function.

The protein localises to the cell membrane. Its function is as follows. G-protein coupled receptor for CRH (corticotropin-releasing factor), UCN (urocortin), UCN2 and UCN3. Has high affinity for UCN. Ligand binding causes a conformation change that triggers signaling via guanine nucleotide-binding proteins (G proteins) and down-stream effectors, such as adenylate cyclase. Promotes the activation of adenylate cyclase, leading to increased intracellular cAMP levels. The sequence is that of Corticotropin-releasing factor receptor 2 (crhr2) from Xenopus laevis (African clawed frog).